The following is a 103-amino-acid chain: Toluene-4-monooxygenase system, effector component (103 aa).

The protein belongs to the TmoD/XamoD family. As to quaternary structure, the alkene monooxygenase multicomponent enzyme system is composed of an electron transfer component and a monooxygenase component interacting with the effector protein TmoD. The electron transfer component is composed of a ferredoxin reductase (TmoF) and a ferredoxin (TmoC), and the monooxygenase component is formed by a heterohexamer (dimer of heterotrimers) of two alpha subunits (TmoA), two beta subunits (TmoE) and two gamma subunits (TmoB).

The protein operates within xenobiotic degradation; toluene degradation. Functionally, effector component of the toluene-4-monooxygenase multicomponent enzyme system which catalyzes the O2- and NADH-dependent hydroxylation of toluene to form p-cresol. Required for optimal efficiency and specificity of the holoenzyme. In Ectopseudomonas mendocina (Pseudomonas mendocina), this protein is Toluene-4-monooxygenase system, effector component.